The primary structure comprises 168 residues: 6,7-dimethyl-8-ribityllumazine synthase (168 aa).

Residues F24, 58 to 60 (ALE), and 82 to 84 (AVI) contribute to the 5-amino-6-(D-ribitylamino)uracil site. Residue 87 to 88 (ET) participates in (2S)-2-hydroxy-3-oxobutyl phosphate binding. H90 (proton donor) is an active-site residue. N115 provides a ligand contact to 5-amino-6-(D-ribitylamino)uracil. Residue R129 coordinates (2S)-2-hydroxy-3-oxobutyl phosphate.

It belongs to the DMRL synthase family.

It carries out the reaction (2S)-2-hydroxy-3-oxobutyl phosphate + 5-amino-6-(D-ribitylamino)uracil = 6,7-dimethyl-8-(1-D-ribityl)lumazine + phosphate + 2 H2O + H(+). Its pathway is cofactor biosynthesis; riboflavin biosynthesis; riboflavin from 2-hydroxy-3-oxobutyl phosphate and 5-amino-6-(D-ribitylamino)uracil: step 1/2. Functionally, catalyzes the formation of 6,7-dimethyl-8-ribityllumazine by condensation of 5-amino-6-(D-ribitylamino)uracil with 3,4-dihydroxy-2-butanone 4-phosphate. This is the penultimate step in the biosynthesis of riboflavin. The protein is 6,7-dimethyl-8-ribityllumazine synthase of Paraburkholderia phytofirmans (strain DSM 17436 / LMG 22146 / PsJN) (Burkholderia phytofirmans).